The following is a 105-amino-acid chain: Pyrimidine/purine nucleoside phosphorylase (105 aa).

This sequence belongs to the nucleoside phosphorylase PpnP family.

The catalysed reaction is a purine D-ribonucleoside + phosphate = a purine nucleobase + alpha-D-ribose 1-phosphate. The enzyme catalyses adenosine + phosphate = alpha-D-ribose 1-phosphate + adenine. It catalyses the reaction cytidine + phosphate = cytosine + alpha-D-ribose 1-phosphate. It carries out the reaction guanosine + phosphate = alpha-D-ribose 1-phosphate + guanine. The catalysed reaction is inosine + phosphate = alpha-D-ribose 1-phosphate + hypoxanthine. The enzyme catalyses thymidine + phosphate = 2-deoxy-alpha-D-ribose 1-phosphate + thymine. It catalyses the reaction uridine + phosphate = alpha-D-ribose 1-phosphate + uracil. It carries out the reaction xanthosine + phosphate = alpha-D-ribose 1-phosphate + xanthine. Catalyzes the phosphorolysis of diverse nucleosides, yielding D-ribose 1-phosphate and the respective free bases. Can use uridine, adenosine, guanosine, cytidine, thymidine, inosine and xanthosine as substrates. Also catalyzes the reverse reactions. This Cupriavidus taiwanensis (strain DSM 17343 / BCRC 17206 / CCUG 44338 / CIP 107171 / LMG 19424 / R1) (Ralstonia taiwanensis (strain LMG 19424)) protein is Pyrimidine/purine nucleoside phosphorylase.